The sequence spans 354 residues: DNA integrity scanning protein DisA (354 aa).

In terms of domain architecture, DAC spans 6 to 144 (GIGIKNVLKI…GDIKYVLRES (139 aa)). Residues Gly73, Leu91, and 104–108 (TRHRT) each bind ATP.

This sequence belongs to the DisA family. As to quaternary structure, homooctamer. The cofactor is Mg(2+).

It carries out the reaction 2 ATP = 3',3'-c-di-AMP + 2 diphosphate. In terms of biological role, participates in a DNA-damage check-point that is active prior to asymmetric division when DNA is damaged. DisA forms globular foci that rapidly scan along the chromosomes during sporulation, searching for lesions. When a lesion is present, DisA pauses at the lesion site. This triggers a cellular response that culminates in a temporary block in sporulation initiation. Functionally, also has diadenylate cyclase activity, catalyzing the condensation of 2 ATP molecules into cyclic di-AMP (c-di-AMP). c-di-AMP acts as a signaling molecule that couples DNA integrity with progression of sporulation. The rise in c-di-AMP level generated by DisA while scanning the chromosome, operates as a positive signal that advances sporulation; upon encountering a lesion, the DisA focus arrests at the damaged site and halts c-di-AMP synthesis. The polypeptide is DNA integrity scanning protein DisA (Clostridium beijerinckii (strain ATCC 51743 / NCIMB 8052) (Clostridium acetobutylicum)).